The sequence spans 241 residues: ATP synthase subunit a (241 aa).

6 consecutive transmembrane segments (helical) span residues 19–39, 80–100, 106–126, 135–155, 177–197, and 203–223; these read AVLI…AKMA, LVAA…IPGF, NINV…YEGI, FAHF…IEIV, LFLW…AYLL, and LLQT…AVAI.

The protein belongs to the ATPase A chain family. As to quaternary structure, F-type ATPases have 2 components, CF(1) - the catalytic core - and CF(0) - the membrane proton channel. CF(1) has five subunits: alpha(3), beta(3), gamma(1), delta(1), epsilon(1). CF(0) has three main subunits: a(1), b(2) and c(9-12). The alpha and beta chains form an alternating ring which encloses part of the gamma chain. CF(1) is attached to CF(0) by a central stalk formed by the gamma and epsilon chains, while a peripheral stalk is formed by the delta and b chains.

It localises to the cell inner membrane. Functionally, key component of the proton channel; it plays a direct role in the translocation of protons across the membrane. The chain is ATP synthase subunit a from Sulfurovum sp. (strain NBC37-1).